The chain runs to 218 residues: N-(5'-phosphoribosyl)anthranilate isomerase (218 aa).

The protein belongs to the TrpF family.

It catalyses the reaction N-(5-phospho-beta-D-ribosyl)anthranilate = 1-(2-carboxyphenylamino)-1-deoxy-D-ribulose 5-phosphate. The protein operates within amino-acid biosynthesis; L-tryptophan biosynthesis; L-tryptophan from chorismate: step 3/5. The protein is N-(5'-phosphoribosyl)anthranilate isomerase of Alcanivorax borkumensis (strain ATCC 700651 / DSM 11573 / NCIMB 13689 / SK2).